The chain runs to 54 residues: ATP synthase protein 8 (54 aa).

A helical membrane pass occupies residues 9-25 (WVFLFFLVWLVLGFLGL).

This sequence belongs to the ATPase protein 8 family. As to quaternary structure, F-type ATPases have 2 components, CF(1) - the catalytic core - and CF(0) - the membrane proton channel.

The protein resides in the mitochondrion membrane. Mitochondrial membrane ATP synthase (F(1)F(0) ATP synthase or Complex V) produces ATP from ADP in the presence of a proton gradient across the membrane which is generated by electron transport complexes of the respiratory chain. F-type ATPases consist of two structural domains, F(1) - containing the extramembraneous catalytic core and F(0) - containing the membrane proton channel, linked together by a central stalk and a peripheral stalk. During catalysis, ATP synthesis in the catalytic domain of F(1) is coupled via a rotary mechanism of the central stalk subunits to proton translocation. Part of the complex F(0) domain. Minor subunit located with subunit a in the membrane. The chain is ATP synthase protein 8 (MTATP8) from Branchiostoma floridae (Florida lancelet).